The primary structure comprises 548 residues: Sulochrin halogenase gedL (548 aa).

FAD contacts are provided by G14, A17, and E47. Chloride is bound by residues S333 and G334. FAD is bound at residue V335.

It belongs to the flavin-dependent halogenase family.

It catalyses the reaction sulochrin + 2 FADH2 + 2 chloride + 2 O2 = dihydrogeodin + 2 FAD + 4 H2O + H(+). It functions in the pathway secondary metabolite biosynthesis. Its function is as follows. Sulochrin halogenase; part of the gene cluster that mediates the biosynthesis of geodin, an intermediate in the biosynthesis of other natural products. The pathway begins with the synthesis of atrochrysone thioester by the polyketide synthase (PKS) gedC. The atrochrysone carboxyl ACP thioesterase gedB then breaks the thioester bond and releases the atrochrysone carboxylic acid from gedC. The atrochrysone carboxylic acid is then converted to atrochrysone which is further transformed into emodinanthrone. The next step is performed by the emodinanthrone oxygenase gedH that catalyzes the oxidation of emodinanthrone to emodin. Emodin O-methyltransferase encoded probably by gedA then catalyzes methylation of the 8-hydroxy group of emodin to form questin. Ring cleavage of questin by questin oxidase gedK leads to desmethylsulochrin via several intermediates including questin epoxide. Another methylation step probably catalyzed by methyltransferase gedG leads to the formation of sulochrin which is further converted to dihydrogeodin by the sulochrin halogenase gedL. Finally, the dihydrogeodin oxidase gedJ catalyzes the stereospecific phenol oxidative coupling reaction converting dihydrogeodin to geodin. In Aspergillus terreus (strain NIH 2624 / FGSC A1156), this protein is Sulochrin halogenase gedL.